The primary structure comprises 170 residues: Type II secretion system protein H (170 aa).

A propeptide spans 1–5 (MRQRG) (leader sequence). N-methylphenylalanine is present on phenylalanine 6. The helical transmembrane segment at 6-29 (FTLLEMMLILLLMGVSAGMVLLAF) threads the bilayer.

It belongs to the GSP H family. In terms of assembly, type II secretion is composed of four main components: the outer membrane complex, the inner membrane complex, the cytoplasmic secretion ATPase and the periplasm-spanning pseudopilus. Interacts with core component PulG. Post-translationally, cleaved by prepilin peptidase. In terms of processing, methylated by prepilin peptidase at the amino group of the N-terminal phenylalanine once the leader sequence is cleaved by prepilin peptidase.

It is found in the cell inner membrane. Component of the type II secretion system required for the energy-dependent secretion of extracellular factors such as proteases and toxins from the periplasm. Part of the pseudopilus tip complex that is critical for the recognition and binding of secretion substrates. The sequence is that of Type II secretion system protein H (pulH) from Klebsiella pneumoniae.